The following is a 416-amino-acid chain: MTITITNIKRVGSEQTESLTIENGLIKGWNLPAEGEIFDGQGGTLAPALIELHAHLREPGQTEKEDLASGLAAASAGGYGTVVCMPNTRPVIDDPALVRSLIEKARGLGFARLRPAAAVTKGEKGEQLTEMSYLKEAGAVMFTDDGLTNENARVLRLGMEYAKSLGMVISVHAEDDALRAGGVMNEGPVSESLGLPGNPAAAAAARVARDMEIVALTGARLHVQHLSTARELDIVRDAKRRGLPVTCEVCPHHLDLTDESLRTFDAMYKVAPPLRTRADADYLLEGLLDGSVDCIATDHAPHTRAEKERDLLDAPSGIAYIEIAFPIMWTRFGERLGLEKLIDLMTAGPARVMGWPEPSLEAGAPADMVVLDLETEREVNPAEFKSKAKFTPWQGQKLRGFPLLTVVDGKVAYRRE.

Zn(2+) is bound by residues histidine 53 and histidine 55. Substrate contacts are provided by residues 55–57 (HLR) and asparagine 87. Zn(2+) contacts are provided by aspartate 145, histidine 172, histidine 225, and aspartate 298. Aspartate 298 is an active-site residue. Residue histidine 302 coordinates substrate.

The protein belongs to the metallo-dependent hydrolases superfamily. DHOase family. Class I DHOase subfamily. The cofactor is Zn(2+).

The catalysed reaction is (S)-dihydroorotate + H2O = N-carbamoyl-L-aspartate + H(+). It participates in pyrimidine metabolism; UMP biosynthesis via de novo pathway; (S)-dihydroorotate from bicarbonate: step 3/3. Catalyzes the reversible cyclization of carbamoyl aspartate to dihydroorotate. This is Dihydroorotase from Deinococcus radiodurans (strain ATCC 13939 / DSM 20539 / JCM 16871 / CCUG 27074 / LMG 4051 / NBRC 15346 / NCIMB 9279 / VKM B-1422 / R1).